The primary structure comprises 462 residues: Chromosomal replication initiator protein DnaA (462 aa).

Positions 1–83 (MSLSLWQQCL…LRFEVGSKPA (83 aa)) are domain I, interacts with DnaA modulators. The tract at residues 83-125 (AARAHNNPVTASVSAPVAPVTRSAPMRPSWDNSPAQPELSYRS) is domain II. The tract at residues 104-125 (RSAPMRPSWDNSPAQPELSYRS) is disordered. The span at 112 to 125 (WDNSPAQPELSYRS) shows a compositional bias: polar residues. Positions 126 to 342 (NVNPKHTFDN…GALNRVIANA (217 aa)) are domain III, AAA+ region. Residues Gly-170, Gly-172, Lys-173, and Thr-174 each contribute to the ATP site. Residues 343–462 (NFTGRAITID…FSNLIRTLSS (120 aa)) are domain IV, binds dsDNA.

It belongs to the DnaA family. Oligomerizes as a right-handed, spiral filament on DNA at oriC.

The protein resides in the cytoplasm. Functionally, plays an essential role in the initiation and regulation of chromosomal replication. ATP-DnaA binds to the origin of replication (oriC) to initiate formation of the DNA replication initiation complex once per cell cycle. Binds the DnaA box (a 9 base pair repeat at the origin) and separates the double-stranded (ds)DNA. Forms a right-handed helical filament on oriC DNA; dsDNA binds to the exterior of the filament while single-stranded (ss)DNA is stabiized in the filament's interior. The ATP-DnaA-oriC complex binds and stabilizes one strand of the AT-rich DNA unwinding element (DUE), permitting loading of DNA polymerase. After initiation quickly degrades to an ADP-DnaA complex that is not apt for DNA replication. Binds acidic phospholipids. The chain is Chromosomal replication initiator protein DnaA from Yersinia pseudotuberculosis serotype O:1b (strain IP 31758).